A 221-amino-acid chain; its full sequence is U1 small nuclear ribonucleoprotein C (221 aa).

A Matrin-type zinc finger spans residues 4–36 (HYCDYCDVFLTHDSVSVRKAHNSGRNHLQNVRE). A disordered region spans residues 80 to 221 (GAGPLSGSSD…PHSRTGYGPR (142 aa)). The segment covering 142-158 (YSRPPPQGGPYSRPPPD) has biased composition (pro residues). Residues 178–190 (PLGYGAPLPGAYP) show a composition bias toward low complexity. Pro residues predominate over residues 191–204 (SGPPPNMRGPPPPL).

The protein belongs to the U1 small nuclear ribonucleoprotein C family. As to quaternary structure, U1 snRNP is composed of the 7 core Sm proteins B/B', D1, D2, D3, E, F and G that assemble in a heptameric protein ring on the Sm site of the small nuclear RNA to form the core snRNP, and at least 3 U1 snRNP-specific proteins U1-70K, U1-A and U1-C. U1-C interacts with U1 snRNA and the 5' splice-site region of the pre-mRNA.

It is found in the nucleus. In terms of biological role, component of the spliceosomal U1 snRNP, which is essential for recognition of the pre-mRNA 5' splice-site and the subsequent assembly of the spliceosome. U1-C is directly involved in initial 5' splice-site recognition for both constitutive and regulated alternative splicing. The interaction with the 5' splice-site seems to precede base-pairing between the pre-mRNA and the U1 snRNA. Stimulates commitment or early (E) complex formation by stabilizing the base pairing of the 5' end of the U1 snRNA and the 5' splice-site region. The polypeptide is U1 small nuclear ribonucleoprotein C (Mycosarcoma maydis (Corn smut fungus)).